The following is a 347-amino-acid chain: UDP-3-O-acylglucosamine N-acyltransferase (347 aa).

The active-site Proton acceptor is the histidine 241.

It belongs to the transferase hexapeptide repeat family. LpxD subfamily. As to quaternary structure, homotrimer.

It catalyses the reaction a UDP-3-O-[(3R)-3-hydroxyacyl]-alpha-D-glucosamine + a (3R)-hydroxyacyl-[ACP] = a UDP-2-N,3-O-bis[(3R)-3-hydroxyacyl]-alpha-D-glucosamine + holo-[ACP] + H(+). Its pathway is bacterial outer membrane biogenesis; LPS lipid A biosynthesis. Its function is as follows. Catalyzes the N-acylation of UDP-3-O-acylglucosamine using 3-hydroxyacyl-ACP as the acyl donor. Is involved in the biosynthesis of lipid A, a phosphorylated glycolipid that anchors the lipopolysaccharide to the outer membrane of the cell. This is UDP-3-O-acylglucosamine N-acyltransferase from Nitrosococcus oceani (strain ATCC 19707 / BCRC 17464 / JCM 30415 / NCIMB 11848 / C-107).